We begin with the raw amino-acid sequence, 520 residues long: Cytochrome P450 72A397 (520 aa).

The chain crosses the membrane as a helical span at residues 14–34; the sequence is AVAVAVVVVGWAWKVLNWVWV. A heme-binding site is contributed by C468.

It belongs to the cytochrome P450 family. The cofactor is heme.

Its subcellular location is the membrane. The catalysed reaction is oleanolate + reduced [NADPH--hemoprotein reductase] + O2 = hederagenin + oxidized [NADPH--hemoprotein reductase] + H2O + H(+). Functionally, catalyzes the oxidation of oleanolate at the C-23 position to form hederagenin. The sequence is that of Cytochrome P450 72A397 from Kalopanax septemlobus (Castor aralia).